Reading from the N-terminus, the 1212-residue chain is DNA-directed RNA polymerase subunit beta (1212 aa).

The segment covering 1176–1195 (QQEKKKLAEEAAKKDDKSAE) has biased composition (basic and acidic residues). Positions 1176 to 1212 (QQEKKKLAEEAAKKDDKSAEPVDQSDSSTSSDDKVSK) are disordered.

This sequence belongs to the RNA polymerase beta chain family. The RNAP catalytic core consists of 2 alpha, 1 beta, 1 beta' and 1 omega subunit. When a sigma factor is associated with the core the holoenzyme is formed, which can initiate transcription.

The catalysed reaction is RNA(n) + a ribonucleoside 5'-triphosphate = RNA(n+1) + diphosphate. DNA-dependent RNA polymerase catalyzes the transcription of DNA into RNA using the four ribonucleoside triphosphates as substrates. The protein is DNA-directed RNA polymerase subunit beta of Lactobacillus gasseri (strain ATCC 33323 / DSM 20243 / BCRC 14619 / CIP 102991 / JCM 1131 / KCTC 3163 / NCIMB 11718 / NCTC 13722 / AM63).